Here is a 580-residue protein sequence, read N- to C-terminus: Potassium-transporting ATPase potassium-binding subunit (580 aa).

Helical transmembrane passes span 3–23 (ASGA…SVPL), 65–85 (DYAF…YALQ), 136–156 (GLGV…VALI), 179–199 (LYIL…QGVV), 263–283 (LSNF…CHTF), 293–313 (GWAV…ACVA), 399–419 (GLYG…LMVG), 436–456 (MASL…AIAV), 504–524 (AIGV…LALA), and 546–566 (LFVG…FVPA).

Belongs to the KdpA family. The system is composed of three essential subunits: KdpA, KdpB and KdpC.

The protein localises to the cell inner membrane. Functionally, part of the high-affinity ATP-driven potassium transport (or Kdp) system, which catalyzes the hydrolysis of ATP coupled with the electrogenic transport of potassium into the cytoplasm. This subunit binds the periplasmic potassium ions and delivers the ions to the membrane domain of KdpB through an intramembrane tunnel. The protein is Potassium-transporting ATPase potassium-binding subunit of Sorangium cellulosum (strain So ce56) (Polyangium cellulosum (strain So ce56)).